Reading from the N-terminus, the 37-residue chain is Large ribosomal subunit protein bL36 (37 aa).

It belongs to the bacterial ribosomal protein bL36 family.

This chain is Large ribosomal subunit protein bL36, found in Photobacterium profundum (strain SS9).